A 346-amino-acid chain; its full sequence is UDP-N-acetylenolpyruvoylglucosamine reductase (346 aa).

The 172-residue stretch at 18–189 (LRAQARAFIA…VSVVFALKTH (172 aa)) folds into the FAD-binding PCMH-type domain. The active site involves Arg165. The active-site Proton donor is the Ser240. The active site involves Glu336.

The protein belongs to the MurB family. FAD serves as cofactor.

The protein localises to the cytoplasm. It catalyses the reaction UDP-N-acetyl-alpha-D-muramate + NADP(+) = UDP-N-acetyl-3-O-(1-carboxyvinyl)-alpha-D-glucosamine + NADPH + H(+). It functions in the pathway cell wall biogenesis; peptidoglycan biosynthesis. Its function is as follows. Cell wall formation. This chain is UDP-N-acetylenolpyruvoylglucosamine reductase, found in Neisseria meningitidis serogroup A / serotype 4A (strain DSM 15465 / Z2491).